Reading from the N-terminus, the 441-residue chain is Putative serine/threonine-protein kinase F31E3.2 (441 aa).

Basic residues predominate over residues 1 to 16; that stretch reads MGNVATRKRPGCHHHI. The interval 1-41 is disordered; that stretch reads MGNVATRKRPGCHHHIGRNEENLDDDEDGPAKKRLRIGEPQ. A Protein kinase domain is found at 126–381; the sequence is FVLERQLGRG…FTVLHAHPFF (256 aa). ATP contacts are provided by residues 132-140 and K156; that span reads LGRGSFGVV. The active-site Proton acceptor is D253.

The protein belongs to the protein kinase superfamily. Ser/Thr protein kinase family.

It catalyses the reaction L-seryl-[protein] + ATP = O-phospho-L-seryl-[protein] + ADP + H(+). The enzyme catalyses L-threonyl-[protein] + ATP = O-phospho-L-threonyl-[protein] + ADP + H(+). This is Putative serine/threonine-protein kinase F31E3.2 from Caenorhabditis elegans.